Here is a 302-residue protein sequence, read N- to C-terminus: RESGCSFVLALMQKHRRRERRFGRDMETIGFAVYEVPRELVGQPALHLKRDFFLANASRARSEQFINLREVSTRFRLPPGEYVVVPSTFEPNKEGDFVLRFFSEKRAGTQELDDQIQANLPDEQVLSAEEIDENFKALFRQLAGEDLEISVRELQTILNRITSKHKDLRTKGFSMESCRSMVNLMDRDGNGKLGLVEFNILWNRIRNYLAIFRKFDLDKSGSMSAYEMRMAIESAGFKLNKKLYELIITRYSEPDLAVDFDNFVCCLVRLETMFRFFKTLDTDLDGVVTFDLFKWLQLTMFA.

Positions 1-114 (RESGCSFVLA…KRAGTQELDD (114 aa)) are domain III. Positions 115–130 (QIQANLPDEQVLSAEE) are linker. Residues 131-301 (IDENFKALFR…LFKWLQLTMF (171 aa)) are domain IV. 3 EF-hand domains span residues 173–206 (FSMESCRSMVNLMDRDGNGKLGLVEFNILWNRIR), 203–238 (NRIRNYLAIFRKFDLDKSGSMSAYEMRMAIESAGFK), and 268–302 (VRLETMFRFFKTLDTDLDGVVTFDLFKWLQLTMFA). 10 residues coordinate Ca(2+): D186, D188, N190, K192, E197, D216, D218, S220, S222, and E227.

The protein belongs to the peptidase C2 family. Forms a heterodimer with a small (regulatory) subunit CAPNS1. Ca(2+) is required as a cofactor. The N-terminus is blocked. Post-translationally, undergoes calcium-induced successive autoproteolytic cleavages that generate a membrane-bound 78 kDa active form and an intracellular 75 kDa active form. Calpastatin reduces with high efficiency the transition from 78 kDa to 75 kDa calpain forms. Ubiquitous.

Its subcellular location is the cytoplasm. The protein resides in the cell membrane. The catalysed reaction is Broad endopeptidase specificity.. Activated by micromolar concentrations of calcium and inhibited by calpastatin. Its function is as follows. Calcium-regulated non-lysosomal thiol-protease which catalyzes limited proteolysis of substrates involved in cytoskeletal remodeling and signal transduction. Proteolytically cleaves CTBP1. Cleaves and activates caspase-7 (CASP7). This is Calpain-1 catalytic subunit from Oryctolagus cuniculus (Rabbit).